The following is a 686-amino-acid chain: Rhophilin-2 (686 aa).

The REM-1 domain occupies 26–100 (NPLAQTGRSK…LEGLNISVGV (75 aa)). Residues 46 to 66 (QILKAVRMRTGAENLLKVATN) form an interaction with Rho region. The 392-residue stretch at 111–502 (PLIPLGLKET…TDFFQKLGPL (392 aa)) folds into the BRO1 domain. One can recognise a PDZ domain in the interval 515–593 (RGIHFTVEEG…EEVEMKVVSL (79 aa)). Thr-655 bears the Phosphothreonine mark.

The protein belongs to the RHPN family. In terms of assembly, interacts with GTP-bound RhoA and RhoB. Interacts with both GTP- and GDP-bound RhoA. Interacts with KRT18.

It localises to the cytoplasm. It is found in the perinuclear region. Binds specifically to GTP-Rho. May function in a Rho pathway to limit stress fiber formation and/or increase the turnover of F-actin structures in the absence of high levels of RhoA activity. This is Rhophilin-2 (Rhpn2) from Mus musculus (Mouse).